The following is a 113-amino-acid chain: Nucleoid-associated protein CLJ_B0037 (113 aa).

Residues 93 to 102 (EEDTSSEVKR) are compositionally biased toward basic and acidic residues. The tract at residues 93-113 (EEDTSSEVKRLTGGMNLPGMF) is disordered.

It belongs to the YbaB/EbfC family. Homodimer.

It localises to the cytoplasm. The protein resides in the nucleoid. Functionally, binds to DNA and alters its conformation. May be involved in regulation of gene expression, nucleoid organization and DNA protection. The chain is Nucleoid-associated protein CLJ_B0037 from Clostridium botulinum (strain 657 / Type Ba4).